A 373-amino-acid chain; its full sequence is Enoyl-[acyl-carrier-protein] reductase, mitochondrial (373 aa).

The N-terminal 53 residues, 1 to 53 (MWVCGALCRTRAPAQLGQRLLPESRRRRPASASFSASAEPSRVRALVYGHHGD), are a transit peptide targeting the mitochondrion. The residue at position 61 (lysine 61) is an N6-acetyllysine; alternate. Lysine 61 is subject to N6-succinyllysine; alternate. The active-site Proton donor is tyrosine 94. Residues asparagine 167, 193–196 (NSGV), and 216–218 (RDT) contribute to the NADP(+) site. Lysine 252 and lysine 267 each carry N6-acetyllysine; alternate. Lysine 252 and lysine 267 each carry N6-succinyllysine; alternate. NADP(+) contacts are provided by residues 285 to 288 (YGGM) and 310 to 312 (FWL). Lysine 316 is modified (N6-succinyllysine). Lysine 368 lines the NADP(+) pocket.

This sequence belongs to the zinc-containing alcohol dehydrogenase family. Quinone oxidoreductase subfamily. In terms of assembly, homodimer.

The protein resides in the mitochondrion. The catalysed reaction is a 2,3-saturated acyl-[ACP] + NADP(+) = a (2E)-enoyl-[ACP] + NADPH + H(+). It carries out the reaction (2E)-butenoyl-[ACP] + NADPH + H(+) = butanoyl-[ACP] + NADP(+). The enzyme catalyses (2E)-hexenoyl-[ACP] + NADPH + H(+) = hexanoyl-[ACP] + NADP(+). It catalyses the reaction (2E)-octenoyl-[ACP] + NADPH + H(+) = octanoyl-[ACP] + NADP(+). The catalysed reaction is (2E)-decenoyl-[ACP] + NADPH + H(+) = decanoyl-[ACP] + NADP(+). It carries out the reaction (2E)-dodecenoyl-[ACP] + NADPH + H(+) = dodecanoyl-[ACP] + NADP(+). The enzyme catalyses (2E)-tetradecenoyl-[ACP] + NADPH + H(+) = tetradecanoyl-[ACP] + NADP(+). It catalyses the reaction (2E)-hexadecenoyl-[ACP] + NADPH + H(+) = hexadecanoyl-[ACP] + NADP(+). In terms of biological role, catalyzes the NADPH-dependent reduction of trans-2-enoyl thioesters in mitochondrial fatty acid synthesis (fatty acid synthesis type II). Fatty acid chain elongation in mitochondria uses acyl carrier protein (ACP) as an acyl group carrier, but the enzyme accepts both ACP and CoA thioesters as substrates in vitro. Displays a preference for medium-chain over short- and long-chain substrates. May provide the octanoyl chain used for lipoic acid biosynthesis, regulating protein lipoylation and mitochondrial respiratory activity particularly in Purkinje cells. Involved in iron homeostasis; affecting Fe-S cluster assembly and ceramide metabolism. Required for proper morphology and bioenergetic functions of mitochondria. Required for maintenance of neurons. The chain is Enoyl-[acyl-carrier-protein] reductase, mitochondrial (MECR) from Bos taurus (Bovine).